Here is a 448-residue protein sequence, read N- to C-terminus: MEFFISMSETIKYNDDDHKTVFLKTLNEQRLEGEFCDIAIVVEDVKFRAHRCVLAACSTYFKKLFKKLEVDSSSVIEIDFLRSDIFEEVLNYMYTAKISVKKEDVNLMMSSGQILGIRFLDKLCSQKRDVSSPEENTQSKSKYCLKINRPIGEPNDTQDDEVEEIGDHDDSPSDVTVEGTPPSQEDGKSPTTTLRVQEAILKELGSEEVRKVNCYGQEVESMETTESKDLGSQTPQALTFNDGISEVKDEQTPGWTTAAGDMKFEYLLYGHREHIVCQACGKTFSDEARLRKHEKLHTADRPFVCEMCTKGFTTQAHLKEHLKIHTGYKPYSCEVCGKSFIRAPDLKKHERVHSNERPFACHMCDKAFKHKSHLKDHERRHRGEKPFVCGSCTKAFAKASDLKRHENNMHSERKQVTTANSIQSETEQLQAAAMAREAEQQLETIACS.

The 67-residue stretch at 36 to 102 folds into the BTB domain; that stretch reads CDIAIVVEDV…MYTAKISVKK (67 aa). A Nuclear localization signal motif is present at residues 50-66; that stretch reads HRCVLAACSTYFKKLFK. The disordered stretch occupies residues 130–193; it reads VSSPEENTQS…QEDGKSPTTT (64 aa). Positions 156–167 are enriched in acidic residues; that stretch reads DTQDDEVEEIGD. 5 consecutive C2H2-type zinc fingers follow at residues 275–302, 303–330, 331–358, 359–386, and 387–415; these read IVCQ…ADRP, FVCE…GYKP, YSCE…NERP, FACH…GEKP, and FVCG…ERKQ. Over residues 404–415 the composition is skewed to basic and acidic residues; that stretch reads RHENNMHSERKQ. Residues 404–425 form a disordered region; sequence RHENNMHSERKQVTTANSIQSE. Polar residues predominate over residues 416–425; the sequence is VTTANSIQSE.

It belongs to the krueppel C2H2-type zinc-finger protein family. Interacts with ZBTB21.

The protein resides in the nucleus. Its function is as follows. Transcriptional activator of the dopamine transporter (DAT), binding it's promoter at the consensus sequence 5'-CCTGCACAGTTCACGGA-3'. Binds to 5'-d(GCC)(n)-3' trinucleotide repeats in promoter regions and acts as a repressor of the FMR1 gene. Transcriptional repressor of MYC and thymidine kinase promoters. In Gallus gallus (Chicken), this protein is Zinc finger and BTB domain-containing protein 14 (ZBTB14).